Reading from the N-terminus, the 203-residue chain is MTRPLAPGFHIPPDLLLRAYATGVFPMAEHADDPEVFWVRPEMRGIIPLDKFHVPKSLRKLLRRQPYEVRYDTDFTGVIDACAEPSAERAETWINEPIRVAYTELFKRGHCHTVEAWREGKLVGGLYGVSLGRAFFGESMFSREPNASKICLVHLVERLKAGGFLLLDTQFTTDHLRRFGAIDVPRRRYEQMLAEALEETAKF.

The protein belongs to the L/F-transferase family.

The protein resides in the cytoplasm. It carries out the reaction N-terminal L-lysyl-[protein] + L-leucyl-tRNA(Leu) = N-terminal L-leucyl-L-lysyl-[protein] + tRNA(Leu) + H(+). It catalyses the reaction N-terminal L-arginyl-[protein] + L-leucyl-tRNA(Leu) = N-terminal L-leucyl-L-arginyl-[protein] + tRNA(Leu) + H(+). The catalysed reaction is L-phenylalanyl-tRNA(Phe) + an N-terminal L-alpha-aminoacyl-[protein] = an N-terminal L-phenylalanyl-L-alpha-aminoacyl-[protein] + tRNA(Phe). Functions in the N-end rule pathway of protein degradation where it conjugates Leu, Phe and, less efficiently, Met from aminoacyl-tRNAs to the N-termini of proteins containing an N-terminal arginine or lysine. The chain is Leucyl/phenylalanyl-tRNA--protein transferase from Chelativorans sp. (strain BNC1).